The following is a 333-amino-acid chain: MNIGVIGAGSWGTTLADLLSKNGHAVTLWAYEQDLVERMRKSAKNDLYLPDFTLHEKLAYSSDLGEVAAGKDMVVLVAPSQVLRAVVRQAEPHLAKDTILVSAAKGIENDTLMPMSEVLKEVLPEERLQRAAYLSGPTFAREVAAEIPTALTVASEDENIARTVQKIFSCEYFRVYRSSDIVGVELGGALKNVIALAAGISDGLGYGYNARAALITRGLAEMTRIGVAMVARERTFMGLSGMGDLVLTCTGDLSRNRSVGLELGRGRKLEDILSGMRMVAEGVKTTLSAYQLAKRLGVETPIIEQMYLILFENKDPRDAVADLMQRSLKAEMD.

Residues S10, W11, and K105 each coordinate NADPH. Sn-glycerol 3-phosphate contacts are provided by K105, G136, and T138. A140 serves as a coordination point for NADPH. Positions 191, 244, 254, 255, and 256 each coordinate sn-glycerol 3-phosphate. K191 acts as the Proton acceptor in catalysis. Residue R255 participates in NADPH binding. V279 and E281 together coordinate NADPH.

This sequence belongs to the NAD-dependent glycerol-3-phosphate dehydrogenase family.

Its subcellular location is the cytoplasm. The enzyme catalyses sn-glycerol 3-phosphate + NAD(+) = dihydroxyacetone phosphate + NADH + H(+). The catalysed reaction is sn-glycerol 3-phosphate + NADP(+) = dihydroxyacetone phosphate + NADPH + H(+). It functions in the pathway membrane lipid metabolism; glycerophospholipid metabolism. Functionally, catalyzes the reduction of the glycolytic intermediate dihydroxyacetone phosphate (DHAP) to sn-glycerol 3-phosphate (G3P), the key precursor for phospholipid synthesis. The chain is Glycerol-3-phosphate dehydrogenase [NAD(P)+] from Syntrophotalea carbinolica (strain DSM 2380 / NBRC 103641 / GraBd1) (Pelobacter carbinolicus).